We begin with the raw amino-acid sequence, 135 residues long: MPTINQLVRKGRHSKVTKSKSPALNYSYNSMKKESVFNPAPQMRGVATRVGTMTPKKPNSALRKYARVRLSNLIEVTAYIPGEGHNLQEHSVVLIRGGRVKDLPGVRYHIIRGALDTAGVDGRKQSRSKYGTKKD.

A disordered region spans residues Met-1–Lys-20. Positions Arg-9–Lys-18 are enriched in basic residues. At Asp-102 the chain carries 3-methylthioaspartic acid.

Belongs to the universal ribosomal protein uS12 family. Part of the 30S ribosomal subunit. Contacts proteins S8 and S17. May interact with IF1 in the 30S initiation complex.

Functionally, with S4 and S5 plays an important role in translational accuracy. Interacts with and stabilizes bases of the 16S rRNA that are involved in tRNA selection in the A site and with the mRNA backbone. Located at the interface of the 30S and 50S subunits, it traverses the body of the 30S subunit contacting proteins on the other side and probably holding the rRNA structure together. The combined cluster of proteins S8, S12 and S17 appears to hold together the shoulder and platform of the 30S subunit. The protein is Small ribosomal subunit protein uS12 of Lactobacillus helveticus (strain DPC 4571).